A 272-amino-acid chain; its full sequence is Type II secretion system protein C (272 aa).

At 1 to 16 (MNISKLPPLSPSVIRR) the chain is on the cytoplasmic side. A helical membrane pass occupies residues 17–35 (ILFYLLMLLFCQQLAMIFW). At 36-272 (RIGLPDNAPV…DIYMEFGGDE (237 aa)) the chain is on the periplasmic side.

The protein belongs to the GSP C family.

It is found in the cell inner membrane. Its function is as follows. Involved in a type II secretion system (T2SS, formerly general secretion pathway, GSP) for the export of proteins. Required for the translocation of the multiple pectic enzymes. This Dickeya dadantii (strain 3937) (Erwinia chrysanthemi (strain 3937)) protein is Type II secretion system protein C (outC).